The sequence spans 313 residues: GTP cyclohydrolase MptA (313 aa).

Belongs to the GTP cyclohydrolase IV family. As to quaternary structure, homodimer. Requires Fe(2+) as cofactor.

The enzyme catalyses GTP + H2O = 7,8-dihydroneopterin 2',3'-cyclic phosphate + formate + diphosphate + H(+). It participates in cofactor biosynthesis; 5,6,7,8-tetrahydromethanopterin biosynthesis. In terms of biological role, converts GTP to 7,8-dihydro-D-neopterin 2',3'-cyclic phosphate, the first intermediate in the biosynthesis of coenzyme methanopterin. The sequence is that of GTP cyclohydrolase MptA from Methanoculleus marisnigri (strain ATCC 35101 / DSM 1498 / JR1).